A 452-amino-acid chain; its full sequence is uncharacterized protein (452 aa).

Transmembrane regions (helical) follow at residues A8–I28, F39–V59, F77–F97, L100–I122, L134–I156, W161–F183, L203–F222, P226–W243, A266–P286, L302–I322, P330–I350, L359–M379, G393–G415, and M425–L447.

This sequence belongs to the major facilitator superfamily.

Its subcellular location is the cell membrane. This is an uncharacterized protein from Bacillus subtilis (strain 168).